Here is a 204-residue protein sequence, read N- to C-terminus: Heart- and neural crest derivatives-expressed protein 1 (204 aa).

3 disordered regions span residues 1-24, 57-115, and 172-204; these read MNLV…HPAH, APDF…RTES, and LKKA…EKRD. Composition is skewed to basic residues over residues 8–22 and 98–110; these read AHHH…HPHP and LGRR…KKER. Residues 100-152 form the bHLH domain; sequence RRKGSGPKKERRRTESINSAFAELRECIPNVPADTKLSKIKTLRLATSYIAYL. T113 carries the post-translational modification Phosphothreonine; by PLK4. S115 is subject to Phosphoserine; by PLK4.

As to quaternary structure, efficient DNA binding requires dimerization with another bHLH protein. Forms homodimers and heterodimers with TCF3 gene products E12 and E47, HAND2 and HEY1, HEY2 and HEYL (hairy-related transcription factors). Interacts with MDFIC. Interacts with SOX15; the interaction enhances HAND1-induced differentiation of trophoblast giant cells. Post-translationally, phosphorylation by PLK4 disrupts the interaction with MDFIC and leads to translocation into the nucleoplasm, allowing dimerization and transcription factor activity.

Its subcellular location is the nucleus. The protein resides in the nucleoplasm. It is found in the nucleolus. Its function is as follows. Transcription factor that plays an essential role in both trophoblast giant cell differentiation and in cardiac morphogenesis. Binds the DNA sequence 5'-NRTCTG-3' (non-canonical E-box). Acts as a transcriptional repressor of SOX15. In the adult, could be required for ongoing expression of cardiac-specific genes. In Ovis aries (Sheep), this protein is Heart- and neural crest derivatives-expressed protein 1 (HAND1).